An 864-amino-acid chain; its full sequence is MHERYVPADVEAAAQSDWRAADAYRSKEDANRKKFYCVSMLPYPSGKLHMGHVRNYTINDVMYRYLRMNGYNTLMPMGWDAFGMPAENAAMANGVPPAQWTYDNIAYMKKQMQSMGLAIDWSREVTTCKPDYYKWNQWLFLKMLEKGIAYKKTGTVNWDPVDQTVLANEQVIDGRGWRSGALVEKREIPMYYMRITQYADELLNDLDGLGWPERVKIMQQNWIGKSFGVNFGFPYELDGEKKLLRVFTTRADTIMGVTFCAIAAEHPLAARLAQDKPELQAFIDECKRGGVAEADIATMEKKGVATGFSVSHPLTGAPVEVWIGNYVLMSYGEGAVMGVPAHDERDFAFAKKYGLPIRQVIAVEGETYSTDAWQEWYGDKTRAVCVNSGKYDGLAYDAAVDAIAADLKAGGFGDKQITYRLRDWGISRQRYWGTPIPIIHCPSCGDVPVPEQDLPVVLPEDLVPDGTGNPLAKSDAFLNCACPKCGAAAKRETDTMDTFVDSAWYFSRYAAPDAQTMVDARTDYWMPMDQYIGGIEHAILHLLYSRFWAKVMRDLGLVAFGEPAKNLLTQGMVLNETFYREDAAGKKTWYNPADVTVSFDDKGRPVGAVLKADGQPVVLGGIEKMSKSKNNGVDPQMLIDHYGADTARLFTMFAAPPEQQLEWSGAGVDGASRFLRRVWAFGFANREALAVRAPFDVAQLAEADKTLRREIHGVLKQADFDYQRLQYNTVVSAAMKMLNAIEGAKGATPAVLRETYGVLLRVLYPVVPHVTYELWKALGYADEFGPLLDAPWPKVDEAALEQAEIELVLQINGKVRGALKVAKDASREAIEAAAVADEMFAKFAEGKPAKKIIVVPGRLVNVVV.

The 'HIGH' region signature appears at 42-52; sequence PYPSGKLHMGH. The short motif at 624–628 is the 'KMSKS' region element; it reads KMSKS. K627 is a binding site for ATP.

The protein belongs to the class-I aminoacyl-tRNA synthetase family.

Its subcellular location is the cytoplasm. It catalyses the reaction tRNA(Leu) + L-leucine + ATP = L-leucyl-tRNA(Leu) + AMP + diphosphate. This is Leucine--tRNA ligase from Burkholderia thailandensis (strain ATCC 700388 / DSM 13276 / CCUG 48851 / CIP 106301 / E264).